The chain runs to 198 residues: MTLTALLALLLSYLIGAIPAAAWLARARGVDIRKVGSGNSGATNVLRSLGKGPALLVASFDILKGVLAVLLARALGLSAEWAALCGVLAVIGHNFSPFLAFRGGKGVATSFGVIAILDPVLGLTTFVLAIACMWLTRFVSAGSIMGAFIAGALVLVLPRPTWDRAAVLFLAALLVWQHRENIRKLQAGTERRLGEKVS.

5 helical membrane-spanning segments follow: residues 5 to 25 (ALLALLLSYLIGAIPAAAWLA), 52 to 72 (GPALLVASFDILKGVLAVLLA), 81 to 101 (WAALCGVLAVIGHNFSPFLAF), 111 to 131 (FGVIAILDPVLGLTTFVLAIA), and 138 to 158 (FVSAGSIMGAFIAGALVLVLP).

The protein belongs to the PlsY family. As to quaternary structure, probably interacts with PlsX.

The protein resides in the cell membrane. The catalysed reaction is an acyl phosphate + sn-glycerol 3-phosphate = a 1-acyl-sn-glycero-3-phosphate + phosphate. The protein operates within lipid metabolism; phospholipid metabolism. Functionally, catalyzes the transfer of an acyl group from acyl-phosphate (acyl-PO(4)) to glycerol-3-phosphate (G3P) to form lysophosphatidic acid (LPA). This enzyme utilizes acyl-phosphate as fatty acyl donor, but not acyl-CoA or acyl-ACP. The sequence is that of Glycerol-3-phosphate acyltransferase 1 from Deinococcus radiodurans (strain ATCC 13939 / DSM 20539 / JCM 16871 / CCUG 27074 / LMG 4051 / NBRC 15346 / NCIMB 9279 / VKM B-1422 / R1).